A 544-amino-acid chain; its full sequence is MIRYIFITGGVVSSLGKGIASASLGALLQSRGYRVRLRKLDPYLNVDPGTMSPRQHGEVYVTDDGAETDLDLGHYERFTGVSARQSDNITTGRIYQRIIEKERRGDYLGATIQVIPHVTNDIKEFVLSDPGEGVDFVLCEIGGTVGDIEGLPFFEAIRQLGQELGPQRACFIHLTLLPYIPAAGEMKTKPTQHSVKELRSIGIQPQILLCRCDRPIPVNEKGKIASFCNVRLASVIEARDVGHIYDVPMAYHAEGLDSEVLSHFGITDAPPPDLSSWQRIAQTIKNPDGQVTIGLVGKYTDVPDAYKSVSEALGHGGLANKVKVDIRFVDSEKFDDPDAALEDLDGVHGILLPGGFGERGAHGKMRVARYARERNMPCFGICYGMQLSVVEAARNLAGIKNASTSEFGPTKEPVVGLMEEWTKGNEKVTRDASTDLGGTMRLGAYPARLKEGSMVAQVYGSLEISERHRHRYEVNASYIERLEKAGMIFSGMSPDGRLPEIVELEGHPWFIGVQFHPELKSRPFEPHPLFASFIAAAVKQSRLV.

Positions 1–266 are amidoligase domain; sequence MIRYIFITGG…DSEVLSHFGI (266 aa). Ser13 is a CTP binding site. Ser13 contributes to the UTP binding site. ATP-binding positions include 14 to 19 and Asp71; that span reads SLGKGI. Residues Asp71 and Glu140 each contribute to the Mg(2+) site. CTP is bound by residues 147-149, 187-192, and Lys223; these read DIE and KTKPTQ. UTP contacts are provided by residues 187–192 and Lys223; that span reads KTKPTQ. Residue 239 to 241 coordinates ATP; it reads RDV. Residues 292 to 543 form the Glutamine amidotransferase type-1 domain; that stretch reads TIGLVGKYTD…IAAAVKQSRL (252 aa). Position 355 (Gly355) interacts with L-glutamine. Cys382 serves as the catalytic Nucleophile; for glutamine hydrolysis. Residues 383 to 386, Glu406, and Arg471 contribute to the L-glutamine site; that span reads YGMQ. Residues His516 and Glu518 contribute to the active site.

This sequence belongs to the CTP synthase family. Homotetramer.

It carries out the reaction UTP + L-glutamine + ATP + H2O = CTP + L-glutamate + ADP + phosphate + 2 H(+). It catalyses the reaction L-glutamine + H2O = L-glutamate + NH4(+). The catalysed reaction is UTP + NH4(+) + ATP = CTP + ADP + phosphate + 2 H(+). It participates in pyrimidine metabolism; CTP biosynthesis via de novo pathway; CTP from UDP: step 2/2. Its activity is regulated as follows. Allosterically activated by GTP, when glutamine is the substrate; GTP has no effect on the reaction when ammonia is the substrate. The allosteric effector GTP functions by stabilizing the protein conformation that binds the tetrahedral intermediate(s) formed during glutamine hydrolysis. Inhibited by the product CTP, via allosteric rather than competitive inhibition. Its function is as follows. Catalyzes the ATP-dependent amination of UTP to CTP with either L-glutamine or ammonia as the source of nitrogen. Regulates intracellular CTP levels through interactions with the four ribonucleotide triphosphates. This is CTP synthase from Hyphomonas neptunium (strain ATCC 15444).